A 388-amino-acid chain; its full sequence is Probable RNA-binding protein sce3 (388 aa).

The disordered stretch occupies residues 18 to 84 (ESFGSTNWAD…GGMGSGYQRD (67 aa)). Positions 38–50 (DRTTSTYRATPSS) are enriched in polar residues. Residues S49, S50, and S60 each carry the phosphoserine modification. Position 61 is a phosphothreonine (T61). 3 positions are modified to phosphoserine: S64, S67, and S71. The RRM domain occupies 94–169 (FTAHVGNLSF…RPVRITVAEP (76 aa)). The segment covering 171–185 (RSFAREERSTGDWVR) has biased composition (basic and acidic residues). A disordered region spans residues 171–388 (RSFAREERST…WTKIGKGRKH (218 aa)). The residue at position 197 (S197) is a Phosphoserine. Over residues 208-229 (RFRDPARDPSDRVREEPREWVR) the composition is skewed to basic and acidic residues. Residues 248-257 (PRSSSNVNTE) show a composition bias toward polar residues. A phosphoserine mark is found at S250, S251, and S252. Over residues 258–268 (ATPSATTTTSS) the composition is skewed to low complexity. Positions 289–349 (RVEEKLAKRT…LGDGEKKSSE (61 aa)) are enriched in basic and acidic residues. Position 347 is a phosphoserine (S347).

It is found in the cytoplasm. This is Probable RNA-binding protein sce3 (sce3) from Schizosaccharomyces pombe (strain 972 / ATCC 24843) (Fission yeast).